A 187-amino-acid polypeptide reads, in one-letter code: Peptidyl-tRNA hydrolase (187 aa).

Y16 is a tRNA binding site. Residue H21 is the Proton acceptor of the active site. Residues Y66, N68, and N114 each coordinate tRNA.

It belongs to the PTH family. In terms of assembly, monomer.

The protein localises to the cytoplasm. The enzyme catalyses an N-acyl-L-alpha-aminoacyl-tRNA + H2O = an N-acyl-L-amino acid + a tRNA + H(+). In terms of biological role, hydrolyzes ribosome-free peptidyl-tRNAs (with 1 or more amino acids incorporated), which drop off the ribosome during protein synthesis, or as a result of ribosome stalling. Catalyzes the release of premature peptidyl moieties from peptidyl-tRNA molecules trapped in stalled 50S ribosomal subunits, and thus maintains levels of free tRNAs and 50S ribosomes. This Malacoplasma penetrans (strain HF-2) (Mycoplasma penetrans) protein is Peptidyl-tRNA hydrolase.